The following is a 609-amino-acid chain: Glutamine--fructose-6-phosphate aminotransferase [isomerizing] (609 aa).

Residue cysteine 2 is the Nucleophile; for GATase activity of the active site. The Glutamine amidotransferase type-2 domain occupies 2–219 (CGIVAAVTQR…EGDIAIVARK (218 aa)). 2 consecutive SIS domains span residues 288 to 428 (ENNI…SKKE) and 460 to 599 (MANT…IDQP). Lysine 604 acts as the For Fru-6P isomerization activity in catalysis.

Homodimer.

The protein localises to the cytoplasm. The enzyme catalyses D-fructose 6-phosphate + L-glutamine = D-glucosamine 6-phosphate + L-glutamate. Functionally, catalyzes the first step in hexosamine metabolism, converting fructose-6P into glucosamine-6P using glutamine as a nitrogen source. This is Glutamine--fructose-6-phosphate aminotransferase [isomerizing] from Buchnera aphidicola subsp. Acyrthosiphon pisum (strain APS) (Acyrthosiphon pisum symbiotic bacterium).